The following is a 143-amino-acid chain: Large ribosomal subunit protein uL11 (143 aa).

Belongs to the universal ribosomal protein uL11 family. In terms of assembly, part of the ribosomal stalk of the 50S ribosomal subunit. Interacts with L10 and the large rRNA to form the base of the stalk. L10 forms an elongated spine to which L12 dimers bind in a sequential fashion forming a multimeric L10(L12)X complex. Post-translationally, one or more lysine residues are methylated.

Forms part of the ribosomal stalk which helps the ribosome interact with GTP-bound translation factors. This is Large ribosomal subunit protein uL11 from Rhizorhabdus wittichii (strain DSM 6014 / CCUG 31198 / JCM 15750 / NBRC 105917 / EY 4224 / RW1) (Sphingomonas wittichii).